The following is a 787-amino-acid chain: (-)-kolavenyl diphosphate synthase, chloroplastic (787 aa).

The transit peptide at 1–47 directs the protein to the chloroplast; the sequence is MSFATSLPRPTTTGAAGFGLPLATCISLSVSHSFSPKFGICNNTSLR. A substrate-binding site is contributed by K237. 2 residues coordinate Mg(2+): D368 and D370. The short motif at 368 to 371 is the DXDD motif element; sequence DSDD. K454 contacts substrate.

It belongs to the terpene synthase family. Tpsc subfamily. Mg(2+) is required as a cofactor. Expressed in peltate glandular trichomes of leaves. Highly expressed in the first leaf pair.

The protein resides in the plastid. Its subcellular location is the chloroplast. It carries out the reaction (2E,6E,10E)-geranylgeranyl diphosphate = (-)-kolavenyl diphosphate. With respect to regulation, inhibited by high concentrations of magnesium. Functionally, involved in the biosynthesis of clerodane diterpenoids natural products, including salvinorin A with potent agonistic activity on brain kappa-opioid receptors, thus conferring hallucinogenic properties. Diterpene synthase that catalyzes the formation of (-)-kolavenyl diphosphate from geranylgeranyl diphosphate (GGPP) as the first reaction in salvinorin A biosynthesis. This chain is (-)-kolavenyl diphosphate synthase, chloroplastic, found in Salvia divinorum (Maria pastora).